The primary structure comprises 621 residues: MAU2 chromatid cohesion factor homolog (621 aa).

3 TPR repeats span residues 96–129 (FDTA…SQNN), 451–484 (GGFY…ANAE), and 491–524 (SCSL…ASKI).

Belongs to the SCC4/mau-2 family. Interacts with Nipped-B to form the cohesin loading complex.

The protein resides in the nucleus. It localises to the nucleoplasm. Functionally, required for association of the cohesin complex with chromatin during interphase. Plays a role in sister chromatid cohesion and normal progression through prometaphase. The sequence is that of MAU2 chromatid cohesion factor homolog from Drosophila virilis (Fruit fly).